The primary structure comprises 592 residues: Aspartate--tRNA ligase (592 aa).

An L-aspartate-binding site is contributed by E173. The tract at residues 197–200 (QLFK) is aspartate. R219 contacts L-aspartate. ATP-binding positions include 219–221 (RDE) and Q228. H448 is an L-aspartate binding site. E482 is a binding site for ATP. An L-aspartate-binding site is contributed by R489. 534–537 (GLDR) provides a ligand contact to ATP.

Belongs to the class-II aminoacyl-tRNA synthetase family. Type 1 subfamily. Homodimer.

It is found in the cytoplasm. It catalyses the reaction tRNA(Asp) + L-aspartate + ATP = L-aspartyl-tRNA(Asp) + AMP + diphosphate. In terms of biological role, catalyzes the attachment of L-aspartate to tRNA(Asp) in a two-step reaction: L-aspartate is first activated by ATP to form Asp-AMP and then transferred to the acceptor end of tRNA(Asp). The protein is Aspartate--tRNA ligase of Shewanella baltica (strain OS155 / ATCC BAA-1091).